Here is a 168-residue protein sequence, read N- to C-terminus: Sperm acrosome-associated protein 9 (168 aa).

In terms of assembly, microtubule inner protein component of sperm flagellar doublet microtubules. Interacts with CABP1 and CALR. Interacts with INCA1. Interacts with microtubules. As to expression, expressed in sperm (at protein level). Expressed from almost all the cell types of testis, with abundant expression in round and elongated spermatids (at protein level). Predominantly expressed in tissues containing motile cilia.

Its subcellular location is the cytoplasm. The protein resides in the cytoplasmic vesicle. The protein localises to the secretory vesicle. It is found in the acrosome. It localises to the cytoskeleton. Its subcellular location is the cilium basal body. The protein resides in the flagellum axoneme. The protein localises to the cilium axoneme. It is found in the nucleus. Its function is as follows. Microtubule inner protein (MIP) part of the dynein-decorated doublet microtubules (DMTs) of multiciliated respiratory cells and the distal singlet microtubules of monoflagellated spermatozoa. Forms an extensive interaction network cross-linking the lumen of axonemal doublet microtubules. This Mus musculus (Mouse) protein is Sperm acrosome-associated protein 9.